The following is a 334-amino-acid chain: Fructose-1,6-bisphosphatase class 1 (334 aa).

Positions 89, 112, 114, and 115 each coordinate Mg(2+). Substrate-binding positions include 115 to 118 (DGSS), N208, Y241, and K271. Position 277 (E277) interacts with Mg(2+).

This sequence belongs to the FBPase class 1 family. Homotetramer. It depends on Mg(2+) as a cofactor.

It localises to the cytoplasm. The catalysed reaction is beta-D-fructose 1,6-bisphosphate + H2O = beta-D-fructose 6-phosphate + phosphate. It participates in carbohydrate biosynthesis; gluconeogenesis. This Serratia proteamaculans (strain 568) protein is Fructose-1,6-bisphosphatase class 1.